A 217-amino-acid chain; its full sequence is FMN-dependent NADH:quinone oxidoreductase (217 aa).

FMN is bound by residues S10 and 16–18 (SVS).

This sequence belongs to the azoreductase type 1 family. As to quaternary structure, homodimer. FMN is required as a cofactor.

It carries out the reaction 2 a quinone + NADH + H(+) = 2 a 1,4-benzosemiquinone + NAD(+). The catalysed reaction is N,N-dimethyl-1,4-phenylenediamine + anthranilate + 2 NAD(+) = 2-(4-dimethylaminophenyl)diazenylbenzoate + 2 NADH + 2 H(+). In terms of biological role, quinone reductase that provides resistance to thiol-specific stress caused by electrophilic quinones. Its function is as follows. Also exhibits azoreductase activity. Catalyzes the reductive cleavage of the azo bond in aromatic azo compounds to the corresponding amines. This Polaromonas naphthalenivorans (strain CJ2) protein is FMN-dependent NADH:quinone oxidoreductase.